Here is a 129-residue protein sequence, read N- to C-terminus: MGRRDAQLLAALLVLGLCALAGSEKPSPCQCSRLSPHNRTNCGFPGITSDQCFDNGCCFDSSVTGVPWCFHPLPKQESDQCVMEVSDRRNCGYPGISPEECASRKCCFSNFIFEVPWCFFPKSVEDCHY.

The N-terminal stretch at 1–23 (MGRRDAQLLAALLVLGLCALAGS) is a signal peptide. P-type domains follow at residues 29–73 (CQCS…FHPL) and 79–122 (DQCV…FFPK). 7 disulfides stabilise this stretch: cysteine 29/cysteine 127, cysteine 31/cysteine 58, cysteine 42/cysteine 57, cysteine 52/cysteine 69, cysteine 81/cysteine 107, cysteine 91/cysteine 106, and cysteine 101/cysteine 118.

In terms of tissue distribution, stomach.

The protein resides in the secreted. In terms of biological role, inhibits gastrointestinal motility and gastric acid secretion. Could function as a structural component of gastric mucus, possibly by stabilizing glycoproteins in the mucus gel through interactions with carbohydrate side chains. This is Trefoil factor 2 (TFF2) from Homo sapiens (Human).